Here is a 224-residue protein sequence, read N- to C-terminus: MQILLVEDDNTLFQELKKELEQWDFNVAGIEDFGKVMDTFESFNPEIVILDVQLPKYDGFYWCRKMREVSNVPILFLSSRDNPMDQVMSMELGADDYMQKPFYTNVLIAKLQAIYRRVYEFTAEEKRTLTWQDAVVDLSKDSIQKGDDTIFLSKTEMIILEILITKKNQIVSRDTIITALWDDEAFVSDNTLTVNVNRLRKKLSEISMDSAIETKVGKGYMAHE.

The region spanning 2-115 (QILLVEDDNT…VLIAKLQAIY (114 aa)) is the Response regulatory domain. Residue D51 is modified to 4-aspartylphosphate. Positions 126-224 (KRTLTWQDAV…KVGKGYMAHE (99 aa)) form a DNA-binding region, ompR/PhoB-type. 3 positions are modified to phosphothreonine: T128, T130, and T149.

Interacts with GraX. Phosphorylated by GraS. Phosphorylated by Stk1; phosphorylation increases the DNA-binding activity of GraR.

It localises to the cytoplasm. Functionally, member of the two-component regulatory system GraR/GraS involved in resistance against cationic antimicrobial peptides (CAMPs). Upon phosphorylation by GraS, functions as a transcription regulator by direct binding to promoter regions of target genes such as adhesins, exoproteins, transporters, toxins, and proteins involved in cell wall synthesis. Down-regulates the expression of many genes involved in RNA and amino acid synthesis or glycolysis. In Staphylococcus aureus (strain Mu3 / ATCC 700698), this protein is Response regulator protein GraR (graR).